The primary structure comprises 398 residues: 1-deoxy-D-xylulose 5-phosphate reductoisomerase (398 aa).

Residues Thr10, Gly11, Ser12, Ile13, Lys37, Asn38, and Asn124 each coordinate NADPH. Lys125 contacts 1-deoxy-D-xylulose 5-phosphate. Residue Glu126 coordinates NADPH. Asp150 provides a ligand contact to Mn(2+). Positions 151, 152, 186, and 209 each coordinate 1-deoxy-D-xylulose 5-phosphate. Glu152 contributes to the Mn(2+) binding site. Gly215 is an NADPH binding site. 1-deoxy-D-xylulose 5-phosphate is bound by residues Ser222, Asn227, Lys228, and Glu231. Glu231 contributes to the Mn(2+) binding site.

This sequence belongs to the DXR family. In terms of assembly, homodimer. Requires Mg(2+) as cofactor. Mn(2+) serves as cofactor.

The enzyme catalyses 2-C-methyl-D-erythritol 4-phosphate + NADP(+) = 1-deoxy-D-xylulose 5-phosphate + NADPH + H(+). It participates in isoprenoid biosynthesis; isopentenyl diphosphate biosynthesis via DXP pathway; isopentenyl diphosphate from 1-deoxy-D-xylulose 5-phosphate: step 1/6. Functionally, catalyzes the NADPH-dependent rearrangement and reduction of 1-deoxy-D-xylulose-5-phosphate (DXP) to 2-C-methyl-D-erythritol 4-phosphate (MEP). This is 1-deoxy-D-xylulose 5-phosphate reductoisomerase from Buchnera aphidicola subsp. Acyrthosiphon pisum (strain 5A).